The following is a 91-amino-acid chain: Putative methyltransferase YfdM (91 aa).

The protein is Putative methyltransferase YfdM (yfdM) of Escherichia coli (strain K12).